The sequence spans 115 residues: U31-theraphotoxin-Cg1b (115 aa).

An N-terminal signal peptide occupies residues 1-18 (MKLCVIIIASLMVASVSG). Positions 19-51 (RLRKIKGTELDKKMLLEKLGHGMDIRFEETPRE) are excised as a propeptide. 4 disulfides stabilise this stretch: Cys52–Cys67, Cys60–Cys73, Cys64–Cys113, and Cys66–Cys86.

This sequence belongs to the neurotoxin 03 (Tx2) family. 02 subfamily. Expressed by the venom gland.

It localises to the secreted. In terms of biological role, probable ion channel inhibitor. In Chilobrachys guangxiensis (Chinese earth tiger tarantula), this protein is U31-theraphotoxin-Cg1b.